The sequence spans 121 residues: Large ribosomal subunit protein uL14 (121 aa).

This sequence belongs to the universal ribosomal protein uL14 family. Part of the 50S ribosomal subunit. Forms a cluster with proteins L3 and L19. In the 70S ribosome, L14 and L19 interact and together make contacts with the 16S rRNA in bridges B5 and B8.

Binds to 23S rRNA. Forms part of two intersubunit bridges in the 70S ribosome. The chain is Large ribosomal subunit protein uL14 from Porphyromonas gingivalis (strain ATCC 33277 / DSM 20709 / CIP 103683 / JCM 12257 / NCTC 11834 / 2561).